Here is a 430-residue protein sequence, read N- to C-terminus: Aspartate aminotransferase, mitochondrial (430 aa).

Residues 1–29 (MALLHSARVLSGVASAFHPGLAAAASARA) constitute a mitochondrion transit peptide. Thr48 is modified (phosphothreonine). An N6-acetyllysine modification is found at Lys59. Substrate is bound at residue Gly65. The residue at position 73 (Lys73) is an N6-acetyllysine; alternate. At Lys73 the chain carries N6-succinyllysine; alternate. Residue Lys82 is modified to N6-acetyllysine. Position 90 is an N6-acetyllysine; alternate (Lys90). At Lys90 the chain carries N6-succinyllysine; alternate. Position 96 is a 3'-nitrotyrosine; alternate (Tyr96). A Phosphotyrosine; alternate modification is found at Tyr96. Position 122 is an N6-acetyllysine; alternate (Lys122). Lys122 bears the N6-succinyllysine; alternate mark. Ser143 carries the post-translational modification Phosphoserine. Lys159 carries the N6-acetyllysine; alternate modification. Lys159 carries the post-translational modification N6-succinyllysine; alternate. Trp162 lines the substrate pocket. At Lys185 the chain carries N6-acetyllysine; alternate. N6-succinyllysine; alternate is present on Lys185. Asn215 contacts substrate. Position 227 is an N6-succinyllysine (Lys227). N6-acetyllysine is present on Lys234. 2 positions are modified to N6-acetyllysine; alternate: Lys279 and Lys296. Residue Lys279 is modified to N6-(pyridoxal phosphate)lysine; alternate. Lys296 carries the post-translational modification N6-succinyllysine; alternate. Lys302 bears the N6-acetyllysine mark. Lys309 bears the N6-acetyllysine; alternate mark. Lys309 is subject to N6-succinyllysine; alternate. An Asymmetric dimethylarginine modification is found at Arg313. Lys338 carries the post-translational modification N6-acetyllysine; alternate. Lys338 is modified (N6-succinyllysine; alternate). Lys345 carries the post-translational modification N6-acetyllysine. Residue Lys363 is modified to N6-acetyllysine; alternate. At Lys363 the chain carries N6-succinyllysine; alternate. Lys364 and Lys387 each carry N6-acetyllysine. Residues Lys396 and Lys404 each carry the N6-acetyllysine; alternate modification. Lys396 and Lys404 each carry N6-succinyllysine; alternate. Position 407 (Arg407) interacts with substrate.

This sequence belongs to the class-I pyridoxal-phosphate-dependent aminotransferase family. Homodimer. Pyridoxal 5'-phosphate serves as cofactor.

It is found in the mitochondrion matrix. The protein localises to the cell membrane. It catalyses the reaction L-aspartate + 2-oxoglutarate = oxaloacetate + L-glutamate. It carries out the reaction L-kynurenine + 2-oxoglutarate = kynurenate + L-glutamate + H2O. Functionally, catalyzes the irreversible transamination of the L-tryptophan metabolite L-kynurenine to form kynurenic acid (KA). As a member of the malate-aspartate shuttle, it has a key role in the intracellular NAD(H) redox balance. Is important for metabolite exchange between mitochondria and cytosol, and for amino acid metabolism. Facilitates cellular uptake of long-chain free fatty acids. This is Aspartate aminotransferase, mitochondrial (GOT2) from Oryctolagus cuniculus (Rabbit).